The primary structure comprises 728 residues: Beta-porphyranase A (728 aa).

A signal peptide spans 1–22 (MSYKYIFLLSAFTLGVPPGIYC). Positions 53, 76, 78, 87, 114, and 151 each coordinate substrate. Glu152 serves as the catalytic Proton donor. Positions 235, 279, 326, and 331 each coordinate substrate. The Nucleophile role is filled by Glu279. The 103-residue stretch at 599-701 (TLQNGTFSEG…AVSFDFNSTV (103 aa)) folds into the CBM-cenC domain.

This sequence belongs to the glycosyl hydrolase 86 family.

The enzyme catalyses Hydrolysis of beta-D-galactopyranose-(1-&gt;4)-alpha-L-galactopyranose-6-sulfate linkages in porphyran.. Cleaves the sulfated polysaccharide porphyran at the (1-&gt;4) linkages between beta-D-galactopyranose and alpha-L-galactopyranose-6-sulfate, forming mostly the disaccharide alpha-L-galactopyranose-6-sulfate-(1-&gt;3)-beta-D-galactose. Some longer oligosaccharides of even number of residues are also observed. Inactive on the non-sulfated agarose portion of the porphyran backbone. Can also use methylated galactoses. This is Beta-porphyranase A from Phocaeicola plebeius (strain DSM 17135 / JCM 12973 / CCUG 54634 / M2) (Bacteroides plebeius).